We begin with the raw amino-acid sequence, 693 residues long: Pentatricopeptide repeat-containing protein At2g19280 (693 aa).

PPR repeat units lie at residues 200–234 (LETV…GIFP), 235–269 (SRGV…GRHL), 270–304 (NAAV…GIRP), 305–339 (DIVA…GISQ), 340–370 (DSVS…FRLR), 372–406 (NIFV…GLLP), 407–441 (DCVC…GNPP), 442–476 (SLTT…GLKL), 477–511 (DVVT…GISP), 512–546 (DVAT…GFVP), 547–581 (STLA…RMKP), 582–616 (DVVT…GLKP), and 617–651 (DVVL…GMLP).

This sequence belongs to the PPR family. P subfamily.

In Arabidopsis thaliana (Mouse-ear cress), this protein is Pentatricopeptide repeat-containing protein At2g19280.